Here is a 109-residue protein sequence, read N- to C-terminus: C-X-C motif chemokine 13 (109 aa).

A signal peptide spans 1–22; it reads MKFISTSLLLMLLVSSLSPVQG. Cystine bridges form between Cys-33/Cys-60 and Cys-35/Cys-76.

This sequence belongs to the intercrine alpha (chemokine CxC) family. As to expression, highest levels in liver, followed by spleen, lymph node, appendix and stomach. Low levels in salivary gland, mammary gland and fetal spleen.

Its subcellular location is the secreted. Functionally, chemotactic for B-lymphocytes but not for T-lymphocytes, monocytes and neutrophils. Does not induce calcium release in B-lymphocytes. Binds to BLR1/CXCR5. This chain is C-X-C motif chemokine 13 (CXCL13), found in Homo sapiens (Human).